The primary structure comprises 417 residues: FAD-dependent monooxygenase aptC (417 aa).

The signal sequence occupies residues 1–18 (MTLPVLIIGAGLSGLTTA). FAD contacts are provided by glutamate 32, alanine 43, arginine 117, aspartate 332, and glycine 345.

The protein belongs to the paxM FAD-dependent monooxygenase family. FAD serves as cofactor.

It carries out the reaction 3,6,8,9-tetrahydroxy-1-oxo-3-(2-oxopropyl)-1,2,3,4-tetrahydroanthracene-2-carboxyl-[ACP] + NADPH + O2 + H(+) = 2,3,6,8,9-pentahydroxy-1-oxo-3-(2-oxopropyl)-1,2,3,4-tetrahydroanthracene-2-carboxyl-[ACP] + NADP(+) + H2O. It participates in secondary metabolite biosynthesis. In terms of biological role, FAD-dependent monooxygenase; part of the gene cluster that mediates the biosynthesis of asperthecin, an anthraquinone pigment. Polyketide synthase (PKS) aptA catalyzes the formation of the aromatic polyketide from acetyl coenzyme A and seven malonyl coenzyme A molecules. Polyketide is subsequently hydrolyzed by the action of the hydrolase aptB into endocrocin-9-anthrone. Endocrocin-9-anthrone is then oxidized into endocrocin by the monooxygenase aptC. Endocrocin is likely to decarboxylate spontaneously to form emodin which explains why there is no decarboxylase in the asperthecin biosynthesis cluster. Finally, aptC or another endogenous oxygenase catalyzes additional oxidation steps to form asperthecin. The protein is FAD-dependent monooxygenase aptC of Emericella nidulans (strain FGSC A4 / ATCC 38163 / CBS 112.46 / NRRL 194 / M139) (Aspergillus nidulans).